We begin with the raw amino-acid sequence, 214 residues long: Probable nicotinate-nucleotide adenylyltransferase (214 aa).

This sequence belongs to the NadD family.

It catalyses the reaction nicotinate beta-D-ribonucleotide + ATP + H(+) = deamido-NAD(+) + diphosphate. The protein operates within cofactor biosynthesis; NAD(+) biosynthesis; deamido-NAD(+) from nicotinate D-ribonucleotide: step 1/1. Functionally, catalyzes the reversible adenylation of nicotinate mononucleotide (NaMN) to nicotinic acid adenine dinucleotide (NaAD). The protein is Probable nicotinate-nucleotide adenylyltransferase of Mycobacterium bovis (strain ATCC BAA-935 / AF2122/97).